The primary structure comprises 388 residues: Succinyl-diaminopimelate desuccinylase (388 aa).

His74 is a Zn(2+) binding site. Asp76 is a catalytic residue. Asp107 serves as a coordination point for Zn(2+). Glu142 serves as the catalytic Proton acceptor. Zn(2+) is bound by residues Glu143, Glu171, and His360.

This sequence belongs to the peptidase M20A family. DapE subfamily. In terms of assembly, homodimer. Requires Zn(2+) as cofactor. Co(2+) is required as a cofactor.

The catalysed reaction is N-succinyl-(2S,6S)-2,6-diaminopimelate + H2O = (2S,6S)-2,6-diaminopimelate + succinate. Its pathway is amino-acid biosynthesis; L-lysine biosynthesis via DAP pathway; LL-2,6-diaminopimelate from (S)-tetrahydrodipicolinate (succinylase route): step 3/3. Functionally, catalyzes the hydrolysis of N-succinyl-L,L-diaminopimelic acid (SDAP), forming succinate and LL-2,6-diaminopimelate (DAP), an intermediate involved in the bacterial biosynthesis of lysine and meso-diaminopimelic acid, an essential component of bacterial cell walls. The protein is Succinyl-diaminopimelate desuccinylase of Rhodopseudomonas palustris (strain BisB5).